Reading from the N-terminus, the 463-residue chain is Glycine--tRNA ligase (463 aa).

The substrate site is built by Arg-100 and Glu-175. Residues 207–209 (RNE), 217–222 (FRTREF), 291–292 (EL), and 335–338 (GADR) each bind ATP. 222 to 226 (FEQME) contributes to the substrate binding site. 331-335 (EPSLG) lines the substrate pocket.

Belongs to the class-II aminoacyl-tRNA synthetase family. As to quaternary structure, homodimer.

Its subcellular location is the cytoplasm. The enzyme catalyses tRNA(Gly) + glycine + ATP = glycyl-tRNA(Gly) + AMP + diphosphate. In terms of biological role, catalyzes the attachment of glycine to tRNA(Gly). This is Glycine--tRNA ligase from Clostridium beijerinckii (strain ATCC 51743 / NCIMB 8052) (Clostridium acetobutylicum).